The primary structure comprises 20 residues: U1-poneritoxin-Ni1a (20 aa).

A Lysine amide modification is found at Lys20.

The protein belongs to the non-disulfide-bridged peptide (NDBP) superfamily. Medium-length antimicrobial peptide (group 3) family. Ponericin-W subfamily. Expressed by the venom gland.

Its subcellular location is the secreted. It localises to the target cell membrane. Functionally, has activity against Gram-positive bacteria. Has insecticidal and hemolytic activities. May act by disrupting the integrity of the bacterial cell membrane. This Neoponera inversa (Ant) protein is U1-poneritoxin-Ni1a.